A 1895-amino-acid chain; its full sequence is Probable WRKY transcription factor 19 (1895 aa).

Positions 1–85 are disordered; that stretch reads MSEKEELPLT…SGSGLSQQLN (85 aa). Polar residues predominate over residues 10-22; it reads TLTSIGAATATSD. The span at 28–39 shows a compositional bias: low complexity; the sequence is GSSGEGISSSSS. Polar residues predominate over residues 46 to 62; that stretch reads MQNSPTGLMISQSSSMC. Over residues 75–85 the composition is skewed to low complexity; it reads SSGSGLSQQLN. The PAH domain occupies 291–371; the sequence is RPLTIDGGGN…LGFNTYLSKE (81 aa). Residues 408–417 show a composition bias toward polar residues; the sequence is ANMQPQTEYP. Disordered stretches follow at residues 408–442, 517–538, and 580–620; these read ANMQ…SSLL, YKDR…TYLS, and EASD…ADAS. Residues 418–427 show a composition bias toward low complexity; that stretch reads SSSAVQSFSS. Positions 428-442 are enriched in polar residues; the sequence is GQPQIPTSAPDSSLL. Positions 462-526 form a DNA-binding region, WRKY 1; it reads NVDKQVNDGY…YKDRHNHEPP (65 aa). A DNA-binding region (WRKY 2) is located at residues 635–700; the sequence is SEVDNLDDGY…SLCRRGISVY (66 aa). The TIR domain maps to 666–808; sequence KDYDVVIRYG…EIVRDALKVL (143 aa). The 288-residue stretch at 800–1087 folds into the NB-ARC domain; that stretch reads IVRDALKVLC…LDGCGFSAHV (288 aa). 844–851 provides a ligand contact to ATP; sequence GTVGIGKT. LRR repeat units lie at residues 1206–1227, 1228–1249, 1259–1281, 1282–1304, 1306–1328, 1329–1351, 1352–1371, 1373–1395, 1397–1419, and 1421–1442; these read KLRL…FNPE, NLVE…KKAR, KLKK…SSAT, NLEH…ISYL, KLVF…VDLE, SLEV…SPNV, KELY…IKNL, LLEK…IYKL, HLET…SRRM, and CLRF…ISYL. Residues 1562–1583 are disordered; sequence ETVAPPSSSSEAREEEVETEET. In terms of domain architecture, Protein kinase spans 1626–1877; sequence WQKGQLLGRG…AAELLNHPFV (252 aa). ATP is bound by residues 1632–1640 and K1654; that span reads LGRGSLGSV. D1758 is an active-site residue.

The protein belongs to the disease resistance X-TIR-NB-LRR-X family.

Its subcellular location is the nucleus. In terms of biological role, transcription factor. Interacts specifically with the W box (5'-(T)TGAC[CT]-3'), a frequently occurring elicitor-responsive cis-acting element. May act also as a disease resistance protein with a serine/threonine-protein kinase activity. This is Probable WRKY transcription factor 19 (WRKY19) from Arabidopsis thaliana (Mouse-ear cress).